The following is a 224-amino-acid chain: Ribose-5-phosphate isomerase A (224 aa).

Substrate contacts are provided by residues 34–37 (TGST), 87–90 (DGAD), and 100–103 (KGGG). Residue Glu109 is the Proton acceptor of the active site. Lys127 contacts substrate.

It belongs to the ribose 5-phosphate isomerase family. In terms of assembly, homodimer.

The enzyme catalyses aldehydo-D-ribose 5-phosphate = D-ribulose 5-phosphate. The protein operates within carbohydrate degradation; pentose phosphate pathway; D-ribose 5-phosphate from D-ribulose 5-phosphate (non-oxidative stage): step 1/1. Catalyzes the reversible conversion of ribose-5-phosphate to ribulose 5-phosphate. In Francisella tularensis subsp. novicida (strain U112), this protein is Ribose-5-phosphate isomerase A.